Reading from the N-terminus, the 888-residue chain is Bifunctional uridylyltransferase/uridylyl-removing enzyme (888 aa).

The tract at residues methionine 1–proline 348 is uridylyltransferase. The segment at isoleucine 349 to threonine 709 is uridylyl-removing. An HD domain is found at valine 468–leucine 590. ACT domains are found at residues glutamate 710–methionine 787 and glutamate 817–glutamine 888.

The protein belongs to the GlnD family. Mg(2+) serves as cofactor.

The catalysed reaction is [protein-PII]-L-tyrosine + UTP = [protein-PII]-uridylyl-L-tyrosine + diphosphate. It carries out the reaction [protein-PII]-uridylyl-L-tyrosine + H2O = [protein-PII]-L-tyrosine + UMP + H(+). Its activity is regulated as follows. Uridylyltransferase (UTase) activity is inhibited by glutamine, while glutamine activates uridylyl-removing (UR) activity. Its function is as follows. Modifies, by uridylylation and deuridylylation, the PII regulatory proteins (GlnB and homologs), in response to the nitrogen status of the cell that GlnD senses through the glutamine level. Under low glutamine levels, catalyzes the conversion of the PII proteins and UTP to PII-UMP and PPi, while under higher glutamine levels, GlnD hydrolyzes PII-UMP to PII and UMP (deuridylylation). Thus, controls uridylylation state and activity of the PII proteins, and plays an important role in the regulation of nitrogen assimilation and metabolism. This chain is Bifunctional uridylyltransferase/uridylyl-removing enzyme, found in Hydrogenovibrio crunogenus (strain DSM 25203 / XCL-2) (Thiomicrospira crunogena).